A 364-amino-acid chain; its full sequence is Fructose-bisphosphate aldolase B (364 aa).

Ala2 is modified (N-acetylalanine). Position 13 is an N6-succinyllysine (Lys13). Ser36 bears the Phosphoserine mark. The residue at position 39 (Thr39) is a Phosphothreonine. Position 43 (Arg43) interacts with beta-D-fructose 1,6-bisphosphate. A Phosphoserine modification is found at Ser89. Thr119 bears the Phosphothreonine mark. Lys121 carries the N6-succinyllysine modification. A Phosphoserine modification is found at Ser132. Residue Glu188 is the Proton acceptor of the active site. Catalysis depends on Lys230, which acts as the Schiff-base intermediate with dihydroxyacetone-P. Phosphoserine is present on residues Ser272, Ser276, Ser299, and Ser301. 272–274 contributes to the beta-D-fructose 1,6-bisphosphate binding site; that stretch reads SGG. Position 304 (Arg304) interacts with beta-D-fructose 1,6-bisphosphate. Ser309 is subject to Phosphoserine. Lys317 bears the N6-succinyllysine mark.

It belongs to the class I fructose-bisphosphate aldolase family. Homotetramer. Interacts with BBS1, BBS2, BBS4 and BBS7. Forms a ternary complex with G6PD and TP53; this interaction is direct.

The protein resides in the cytoplasm. It is found in the cytosol. It localises to the cytoskeleton. Its subcellular location is the microtubule organizing center. The protein localises to the centrosome. The protein resides in the centriolar satellite. The enzyme catalyses beta-D-fructose 1,6-bisphosphate = D-glyceraldehyde 3-phosphate + dihydroxyacetone phosphate. It carries out the reaction beta-D-fructose 1-phosphate = D-glyceraldehyde + dihydroxyacetone phosphate. It participates in carbohydrate degradation; glycolysis; D-glyceraldehyde 3-phosphate and glycerone phosphate from D-glucose: step 4/4. The protein operates within carbohydrate biosynthesis; gluconeogenesis. It functions in the pathway carbohydrate metabolism; fructose metabolism. In terms of biological role, catalyzes the aldol cleavage of fructose 1,6-biphosphate to form two triosephosphates dihydroxyacetone phosphate and D-glyceraldehyde 3-phosphate in glycolysis as well as the reverse stereospecific aldol addition reaction in gluconeogenesis. In fructolysis, metabolizes fructose 1-phosphate derived from the phosphorylation of dietary fructose by fructokinase into dihydroxyacetone phosphate and D-glyceraldehyde. Acts as an adapter independently of its enzymatic activity, exerts a tumor suppressor role by stabilizing the ternary complex with G6PD and TP53 to inhibit G6PD activity and keep oxidative pentose phosphate metabolism in check. In Pongo abelii (Sumatran orangutan), this protein is Fructose-bisphosphate aldolase B (ALDOB).